A 361-amino-acid chain; its full sequence is Peroxidase A (361 aa).

Belongs to the peroxidase family. Post-translationally, partially N-glycosylated.

The protein localises to the secreted. It carries out the reaction 2 a phenolic donor + H2O2 = 2 a phenolic radical donor + 2 H2O. This is Peroxidase A from Aloe vera (Aloe).